A 906-amino-acid chain; its full sequence is Protein translocase subunit SecA (906 aa).

ATP is bound by residues Gln-89, 107 to 111, and Asp-502; that span reads GEGKT. Residues 868-887 form a disordered region; that stretch reads VPPAQRDPADPRTWGKVSRN. Zn(2+) is bound by residues Cys-890, Cys-892, Cys-901, and His-902.

Belongs to the SecA family. As to quaternary structure, monomer and homodimer. Part of the essential Sec protein translocation apparatus which comprises SecA, SecYEG and auxiliary proteins SecDF-YajC and YidC. Zn(2+) is required as a cofactor.

It is found in the cell inner membrane. The protein resides in the cytoplasm. The catalysed reaction is ATP + H2O + cellular proteinSide 1 = ADP + phosphate + cellular proteinSide 2.. Its function is as follows. Part of the Sec protein translocase complex. Interacts with the SecYEG preprotein conducting channel. Has a central role in coupling the hydrolysis of ATP to the transfer of proteins into and across the cell membrane, serving both as a receptor for the preprotein-SecB complex and as an ATP-driven molecular motor driving the stepwise translocation of polypeptide chains across the membrane. In Brucella abortus (strain S19), this protein is Protein translocase subunit SecA.